A 763-amino-acid polypeptide reads, in one-letter code: Cadherin-like protein 26 (763 aa).

An N-terminal signal peptide occupies residues 1–20; it reads MDTRGCAWLLLLLSLPQGQS. Cadherin domains lie at 21 to 140, 141 to 250, 251 to 371, and 370 to 478; these read HQPL…APQF, PEKE…MPTF, MEDR…PPAF, and AFHP…APTL. Residues 21–590 lie on the Extracellular side of the membrane; sequence HQPLHRSKRR…SECEEPSDTW (570 aa). 3 N-linked (GlcNAc...) asparagine glycosylation sites follow: asparagine 56, asparagine 60, and asparagine 146. 2 N-linked (GlcNAc...) asparagine glycosylation sites follow: asparagine 394 and asparagine 440. A helical membrane pass occupies residues 591–611; that stretch reads LLWWALSPVGAALMVLSAALL. Over 612-763 the chain is Cytoplasmic; sequence CLLRCSCTFG…AMCFTSRVPS (152 aa).

As to quaternary structure, homodimer. Component of a cadherin:catenin adhesion complex composed of at least of CDH26, beta-catenin/CTNNB1, alpha-catenin/CTNNA1 and p120 catenin/CTNND1. Post-translationally, N-glycosylated.

It is found in the cell membrane. Its function is as follows. Cadherins are calcium-dependent cell adhesion proteins. They preferentially interact with themselves in a homophilic manner in connecting cells; cadherins may thus contribute to the sorting of heterogeneous cell types. Ligand for integrins alpha-E/beta-7, ITGAE:ITGAB7, alpha-4/beta-7, ITGA4:ITGAB7 and alpha-4/beta-1, ITGA4:ITGAB1 through which modulates CD4(+) T cells activation. This Mus musculus (Mouse) protein is Cadherin-like protein 26 (Cdh26).